A 193-amino-acid polypeptide reads, in one-letter code: Phosphoheptose isomerase (193 aa).

Positions 37-193 constitute an SIS domain; the sequence is LADSFKAGGK…QLIEKEMVKA (157 aa). 52–54 serves as a coordination point for substrate; that stretch reads NGG. The Zn(2+) site is built by H61 and E65. Substrate is bound by residues E65, 93 to 94, 119 to 121, S124, and Q172; these read ND and STS. Zn(2+) contacts are provided by Q172 and H180.

Belongs to the SIS family. GmhA subfamily. Homotetramer. Requires Zn(2+) as cofactor.

Its subcellular location is the cytoplasm. It catalyses the reaction 2 D-sedoheptulose 7-phosphate = D-glycero-alpha-D-manno-heptose 7-phosphate + D-glycero-beta-D-manno-heptose 7-phosphate. Its pathway is carbohydrate biosynthesis; D-glycero-D-manno-heptose 7-phosphate biosynthesis; D-glycero-alpha-D-manno-heptose 7-phosphate and D-glycero-beta-D-manno-heptose 7-phosphate from sedoheptulose 7-phosphate: step 1/1. Its function is as follows. Catalyzes the isomerization of sedoheptulose 7-phosphate in D-glycero-D-manno-heptose 7-phosphate. The sequence is that of Phosphoheptose isomerase from Serratia proteamaculans (strain 568).